We begin with the raw amino-acid sequence, 85 residues long: MKAGIHPNYRTVVFHDLSADTYFKVGSTINTDRTIELEGESWPYVTLDVSSASHPYYTGKQKEFSKEGSTARFQQRFGRFFTGNK.

This sequence belongs to the bacterial ribosomal protein bL31 family. Type B subfamily. As to quaternary structure, part of the 50S ribosomal subunit.

This Serratia proteamaculans (strain 568) protein is Large ribosomal subunit protein bL31B.